Consider the following 96-residue polypeptide: DNA-directed RNA polymerase subunit Rpo11 (96 aa).

Belongs to the archaeal Rpo11/eukaryotic RPB11/RPC19 RNA polymerase subunit family. Part of the RNA polymerase complex.

It is found in the cytoplasm. The enzyme catalyses RNA(n) + a ribonucleoside 5'-triphosphate = RNA(n+1) + diphosphate. DNA-dependent RNA polymerase (RNAP) catalyzes the transcription of DNA into RNA using the four ribonucleoside triphosphates as substrates. The chain is DNA-directed RNA polymerase subunit Rpo11 from Methanococcus maripaludis (strain C5 / ATCC BAA-1333).